A 255-amino-acid chain; its full sequence is 5'-nucleotidase SurE (255 aa).

Residues Asp-7, Asp-8, Ser-38, and Asn-90 each coordinate a divalent metal cation.

The protein belongs to the SurE nucleotidase family. It depends on a divalent metal cation as a cofactor.

The protein resides in the cytoplasm. The enzyme catalyses a ribonucleoside 5'-phosphate + H2O = a ribonucleoside + phosphate. In terms of biological role, nucleotidase that shows phosphatase activity on nucleoside 5'-monophosphates. The sequence is that of 5'-nucleotidase SurE from Picrophilus torridus (strain ATCC 700027 / DSM 9790 / JCM 10055 / NBRC 100828 / KAW 2/3).